A 238-amino-acid chain; its full sequence is Small ribosomal subunit protein uS2 (238 aa).

It belongs to the universal ribosomal protein uS2 family.

This Actinobacillus pleuropneumoniae serotype 7 (strain AP76) protein is Small ribosomal subunit protein uS2.